Here is a 208-residue protein sequence, read N- to C-terminus: N-(5'-phosphoribosyl)anthranilate isomerase (208 aa).

This sequence belongs to the TrpF family.

The catalysed reaction is N-(5-phospho-beta-D-ribosyl)anthranilate = 1-(2-carboxyphenylamino)-1-deoxy-D-ribulose 5-phosphate. It participates in amino-acid biosynthesis; L-tryptophan biosynthesis; L-tryptophan from chorismate: step 3/5. This chain is N-(5'-phosphoribosyl)anthranilate isomerase, found in Natronomonas pharaonis (strain ATCC 35678 / DSM 2160 / CIP 103997 / JCM 8858 / NBRC 14720 / NCIMB 2260 / Gabara) (Halobacterium pharaonis).